A 503-amino-acid chain; its full sequence is ATP synthase subunit alpha (503 aa).

ATP is bound at residue 170–177; sequence GDRKTGKT.

Belongs to the ATPase alpha/beta chains family. In terms of assembly, F-type ATPases have 2 components, CF(1) - the catalytic core - and CF(0) - the membrane proton channel. CF(1) has five subunits: alpha(3), beta(3), gamma(1), delta(1), epsilon(1). CF(0) has four main subunits: a(1), b(1), b'(1) and c(9-12).

It localises to the cellular thylakoid membrane. It catalyses the reaction ATP + H2O + 4 H(+)(in) = ADP + phosphate + 5 H(+)(out). In terms of biological role, produces ATP from ADP in the presence of a proton gradient across the membrane. The alpha chain is a regulatory subunit. This chain is ATP synthase subunit alpha, found in Synechocystis sp. (strain ATCC 27184 / PCC 6803 / Kazusa).